Consider the following 855-residue polypeptide: Envelope glycoprotein gp150 (855 aa).

The Extracellular segment spans residues Met-1–Lys-784. N-linked (GlcNAc...) asparagine; by host glycosylation is found at Asn-220, Asn-258, Asn-269, Asn-274, Asn-298, Asn-336, Asn-418, Asn-422, Asn-448, Asn-469, Asn-481, Asn-499, Asn-518, Asn-531, Asn-548, and Asn-551. A fusion peptide region spans residues Val-615–Ile-635. Residues His-642–Ala-692 adopt a coiled-coil conformation. Positions Ile-661–Lys-679 are immunosuppression. N-linked (GlcNAc...) asparagine; by host glycosylation is found at Asn-716, Asn-720, Asn-728, and Asn-736. Residues Tyr-735–Asp-771 adopt a coiled-coil conformation. A helical membrane pass occupies residues Gly-785 to Pro-805. Over Thr-806–Glu-855 the chain is Cytoplasmic.

As to quaternary structure, the mature envelope protein (Env) consists of a trimer of SU-TM heterodimers attached by noncovalent interactions or by a labile interchain disulfide bond. Post-translationally, specific enzymatic cleavages in vivo yield mature proteins. Envelope glycoproteins are synthesized as an inactive precursor that is N-glycosylated and processed likely by host cell furin or by a furin-like protease in the Golgi to yield the mature SU and TM proteins. The cleavage site between SU and TM requires the minimal sequence [KR]-X-[KR]-R.

Its subcellular location is the virion membrane. The protein localises to the host cell membrane. Its function is as follows. The surface protein (SU) attaches the virus to the host cell by binding to its receptor. This interaction triggers the refolding of the transmembrane protein (TM) and is thought to activate its fusogenic potential by unmasking its fusion peptide. Fusion occurs at the host cell plasma membrane. In terms of biological role, the transmembrane protein (TM) acts as a class I viral fusion protein. Under the current model, the protein has at least 3 conformational states: pre-fusion native state, pre-hairpin intermediate state, and post-fusion hairpin state. During viral and target cell membrane fusion, the coiled coil regions (heptad repeats) assume a trimer-of-hairpins structure, positioning the fusion peptide in close proximity to the C-terminal region of the ectodomain. The formation of this structure appears to drive apposition and subsequent fusion of viral and target cell membranes. Membranes fusion leads to delivery of the nucleocapsid into the cytoplasm. This is Envelope glycoprotein gp150 (env) from Felidae (cat family).